The following is a 540-amino-acid chain: Chaperonin GroEL 1 (540 aa).

ATP contacts are provided by residues 30-33 (TLGP), lysine 51, 87-91 (DGTTT), glycine 415, 480-482 (NAA), and aspartate 496.

Belongs to the chaperonin (HSP60) family. In terms of assembly, forms a cylinder of 14 subunits composed of two heptameric rings stacked back-to-back. Interacts with the co-chaperonin GroES.

It is found in the cytoplasm. The catalysed reaction is ATP + H2O + a folded polypeptide = ADP + phosphate + an unfolded polypeptide.. Its function is as follows. Together with its co-chaperonin GroES, plays an essential role in assisting protein folding. The GroEL-GroES system forms a nano-cage that allows encapsulation of the non-native substrate proteins and provides a physical environment optimized to promote and accelerate protein folding. This is Chaperonin GroEL 1 from Bradyrhizobium diazoefficiens (strain JCM 10833 / BCRC 13528 / IAM 13628 / NBRC 14792 / USDA 110).